The chain runs to 392 residues: Esterase EstB (392 aa).

Residue Ser75 is the Acyl-ester intermediate of the active site.

Belongs to the class-A beta-lactamase family.

It is found in the cytoplasm. Strongly inhibited by eserin, NaF, HgCl2, SDS and Triton X-100. Acts on short-chain (C4-C6) fatty acid esters and triglycerides, including tertiary alcohol esters. Activity on p-nitrophenyl esters is generally higher than on o-nitrophenyl esters. Lacks beta-lactamase activity; it hydrolyzes the ester bond of cephalosporin substrates but there is no opening of the beta-lactam ring observed. This chain is Esterase EstB (estB), found in Burkholderia gladioli (Pseudomonas marginata).